The primary structure comprises 254 residues: Phosphoribosylaminoimidazole-succinocarboxamide synthase (254 aa).

The protein belongs to the SAICAR synthetase family.

The enzyme catalyses 5-amino-1-(5-phospho-D-ribosyl)imidazole-4-carboxylate + L-aspartate + ATP = (2S)-2-[5-amino-1-(5-phospho-beta-D-ribosyl)imidazole-4-carboxamido]succinate + ADP + phosphate + 2 H(+). Its pathway is purine metabolism; IMP biosynthesis via de novo pathway; 5-amino-1-(5-phospho-D-ribosyl)imidazole-4-carboxamide from 5-amino-1-(5-phospho-D-ribosyl)imidazole-4-carboxylate: step 1/2. The polypeptide is Phosphoribosylaminoimidazole-succinocarboxamide synthase (Sinorhizobium medicae (strain WSM419) (Ensifer medicae)).